The chain runs to 265 residues: Putative hydro-lyase PA14_37210 (265 aa).

It belongs to the D-glutamate cyclase family.

The chain is Putative hydro-lyase PA14_37210 from Pseudomonas aeruginosa (strain UCBPP-PA14).